The chain runs to 128 residues: Large ribosomal subunit protein uL22 (128 aa).

It belongs to the universal ribosomal protein uL22 family. Part of the 50S ribosomal subunit.

This protein binds specifically to 23S rRNA; its binding is stimulated by other ribosomal proteins, e.g. L4, L17, and L20. It is important during the early stages of 50S assembly. It makes multiple contacts with different domains of the 23S rRNA in the assembled 50S subunit and ribosome. In terms of biological role, the globular domain of the protein is located near the polypeptide exit tunnel on the outside of the subunit, while an extended beta-hairpin is found that lines the wall of the exit tunnel in the center of the 70S ribosome. The protein is Large ribosomal subunit protein uL22 of Prochlorococcus marinus subsp. pastoris (strain CCMP1986 / NIES-2087 / MED4).